A 142-amino-acid chain; its full sequence is UPF0310 protein PYRAB08750 (142 aa).

The protein belongs to the UPF0310 family.

The protein is UPF0310 protein PYRAB08750 of Pyrococcus abyssi (strain GE5 / Orsay).